Here is a 243-residue protein sequence, read N- to C-terminus: Type III pantothenate kinase (243 aa).

Position 7–14 (7–14 (DLGNSRFK)) interacts with ATP. Substrate-binding positions include Tyr-91 and 98–101 (GVDR). Asp-100 serves as the catalytic Proton acceptor. Residue Thr-122 participates in ATP binding. Thr-172 is a binding site for substrate.

Belongs to the type III pantothenate kinase family. In terms of assembly, homodimer. NH4(+) serves as cofactor. It depends on K(+) as a cofactor.

It localises to the cytoplasm. It catalyses the reaction (R)-pantothenate + ATP = (R)-4'-phosphopantothenate + ADP + H(+). It functions in the pathway cofactor biosynthesis; coenzyme A biosynthesis; CoA from (R)-pantothenate: step 1/5. Functionally, catalyzes the phosphorylation of pantothenate (Pan), the first step in CoA biosynthesis. In Stenotrophomonas maltophilia (strain K279a), this protein is Type III pantothenate kinase.